Reading from the N-terminus, the 2346-residue chain is Highly reducing polyketide synthase claI (2346 aa).

The Ketosynthase family 3 (KS3) domain maps to 10–412 (TPAIAVVGMA…GTNCHLIVED (403 aa)). Residues C183, H295, and H335 each act as for beta-ketoacyl synthase activity in the active site. Positions 530–842 (IFTGQGSQWP…EYFSALKRGE (313 aa)) are malonyl-CoA:ACP transacylase (MAT) domain. The active-site For malonyltransferase activity is the S622. The tract at residues 912 to 1048 (HDLLGSKILG…GLIRTSEEDS (137 aa)) is N-terminal hotdog fold. The dehydratase (DH) domain stretch occupies residues 912 to 1213 (HDLLGSKILG…INGLRFSSVD (302 aa)). One can recognise a PKS/mFAS DH domain in the interval 912-1218 (HDLLGSKILG…FSSVDLGSVQ (307 aa)). Catalysis depends on H944, which acts as the Proton acceptor; for dehydratase activity. The C-terminal hotdog fold stretch occupies residues 1060–1218 (IHATPAQVWY…FSSVDLGSVQ (159 aa)). Residue D1124 is the Proton donor; for dehydratase activity of the active site. The enoyl reductase (ER) domain stretch occupies residues 1633 to 1946 (GSLEALQWTQ…SARHIGKILI (314 aa)). The interval 1972–2151 (TYLIVGGLRG…HSLDLGVVDA (180 aa)) is ketoreductase (KR) domain. Residues 2258–2336 (SQLVEKAVTL…ALAEKMVSKV (79 aa)) form the Carrier domain. S2296 is subject to O-(pantetheine 4'-phosphoryl)serine.

It depends on pantetheine 4'-phosphate as a cofactor.

Its pathway is secondary metabolite biosynthesis. Functionally, highly reducing polyketide synthase; part of the cla gene cluster that produces clavatol and ortho-quinone methide. The clavatol biosynthesis cluster cla and the terrestric acid cluster tra are both involved in the production of peniphenones and penilactones. The non-reducing PKS claF is responsible for the formation of clavatol from successive condensations of 3 malonyl-CoA units, presumably with a simple acetyl-CoA starter unit, and 2 methylation steps. The esterase claE probably collaborates with claF by catalyzing the hydrolysis of ACP-bound acyl intermediates to free the ACP from stalled intermediates. The clavatol oxidase claD then converts clavatol to hydroxyclavatol. Spontaneous dehydration of hydroxyclavatol leads to the accumulation of the highly active ortho-quinone methide. On the other hand, the PKS-NRPS hybrid traA is involved in the formation of crustosic acid, with the help of traB and traD. The polyketide synthase module (PKS) of traA is responsible for the synthesis of the polyketide backbone via the condensation of an acetyl-CoA starter unit with 3 malonyl-CoA units. The downstream nonribosomal peptide synthetase (NRPS) module then amidates the carboxyl end of the polyketide with L-malic acid. Because traA lacks a designated enoylreductase (ER) domain, the required activity is provided the enoyl reductase traG. Crustosic acid undergoes decarboxylation and isomerization to the terrestric acid, catalyzed by the 2-oxoglutarate-dependent dioxygenase traH. Both acids are further converted to the 2 gamma-butyrolactones (R)-5-methyltetronic acid and (S)-5-carboxylmethyltetronic acid, with involvement of the cytochrome P450 monooxygenase claJ. Spontaneous addition of the methide to these gamma-butyrolactones leads to peniphenone D and penilactone D, which undergo again stereospecific attacking by methide to give penilactones A and B. The function of the highly reducing polyketide synthase claI has not been investigated yet. This chain is Highly reducing polyketide synthase claI, found in Penicillium crustosum (Blue mold fungus).